Here is a 443-residue protein sequence, read N- to C-terminus: Sperm-associated antigen 4 protein (443 aa).

A compositionally biased stretch (low complexity) spans 1–36 (MRRSPRSGSAASSHNHTPNFYSENSNSSHSATSGDS). Residues 1 to 107 (MRRSPRSGSA…VRGGASEPSG (107 aa)) form a disordered region. Helical transmembrane passes span 137-157 (FLSL…DGLV) and 168-188 (FLFT…WGLL). Residues 203–244 (TLSQYHHRVHSQGQQLQQLQAELNKLHKEVSSVRAAHSERVA) adopt a coiled-coil conformation. Residues 267–427 (GASIDLEKTS…YRVRAHGVRT (161 aa)) form the SUN domain.

As to quaternary structure, self-associates. Interacts with ODF1. May associate with microtubules. Interacts with SUN3 and SYNE1; suggesting the formation of a spermatogenesis-specific LINC complex; a SUN domain-based heterotrimer of SPAG4 and SUN3 may associate with SYNE1. Interacts with SEPT12 and LMNB1; during spermatogenesis. In terms of tissue distribution, isoform 1 is testis specific and is exclusively expressed in spermatids.

It is found in the membrane. Its subcellular location is the cytoplasm. The protein resides in the cytoskeleton. It localises to the nucleus envelope. The protein localises to the nucleus inner membrane. It is found in the flagellum axoneme. Involved in spermatogenesis. Required for sperm head formation but not required to establish and maintain general polarity of the sperm head. Required for anchoring and organization of the manchette. Required for targeting of SUN3 and probably SYNE1 through a probable SUN1:SYNE3 LINC complex to the nuclear envelope and involved in accurate posterior sperm head localization of the complex. May anchor SUN3 the nuclear envelope. Involved in maintenance of the nuclear envelope integrity. May assist the organization and assembly of outer dense fibers (ODFs), a specific structure of the sperm tail. This Mus musculus (Mouse) protein is Sperm-associated antigen 4 protein (Spag4).